We begin with the raw amino-acid sequence, 439 residues long: Ribosomal protein uS12 methylthiotransferase RimO (439 aa).

Residues Ser-2–Asn-114 form the MTTase N-terminal domain. [4Fe-4S] cluster-binding residues include Cys-11, Cys-45, Cys-77, Cys-146, Cys-150, and Cys-153. The 232-residue stretch at Thr-132–Glu-363 folds into the Radical SAM core domain.

It belongs to the methylthiotransferase family. RimO subfamily. [4Fe-4S] cluster is required as a cofactor.

Its subcellular location is the cytoplasm. The enzyme catalyses L-aspartate(89)-[ribosomal protein uS12]-hydrogen + (sulfur carrier)-SH + AH2 + 2 S-adenosyl-L-methionine = 3-methylsulfanyl-L-aspartate(89)-[ribosomal protein uS12]-hydrogen + (sulfur carrier)-H + 5'-deoxyadenosine + L-methionine + A + S-adenosyl-L-homocysteine + 2 H(+). Its function is as follows. Catalyzes the methylthiolation of an aspartic acid residue of ribosomal protein uS12. The protein is Ribosomal protein uS12 methylthiotransferase RimO of Campylobacter jejuni subsp. jejuni serotype O:6 (strain 81116 / NCTC 11828).